Consider the following 183-residue polypeptide: Adenine phosphoribosyltransferase (183 aa).

The protein belongs to the purine/pyrimidine phosphoribosyltransferase family. In terms of assembly, homodimer.

It localises to the cytoplasm. It catalyses the reaction AMP + diphosphate = 5-phospho-alpha-D-ribose 1-diphosphate + adenine. The protein operates within purine metabolism; AMP biosynthesis via salvage pathway; AMP from adenine: step 1/1. Functionally, catalyzes a salvage reaction resulting in the formation of AMP, that is energically less costly than de novo synthesis. This is Adenine phosphoribosyltransferase from Shewanella piezotolerans (strain WP3 / JCM 13877).